The following is a 128-amino-acid chain: Glycine cleavage system H protein (128 aa).

A Lipoyl-binding domain is found at 22-104; sequence AIVVGITDFA…YEEGWMITIE (83 aa). Lys-63 is modified (N6-lipoyllysine).

This sequence belongs to the GcvH family. In terms of assembly, the glycine cleavage system is composed of four proteins: P, T, L and H. It depends on (R)-lipoate as a cofactor.

Functionally, the glycine cleavage system catalyzes the degradation of glycine. The H protein shuttles the methylamine group of glycine from the P protein to the T protein. In Anaeromyxobacter dehalogenans (strain 2CP-1 / ATCC BAA-258), this protein is Glycine cleavage system H protein.